A 378-amino-acid polypeptide reads, in one-letter code: Chaperone protein DnaJ 2 (378 aa).

One can recognise a J domain in the interval 4 to 68 (DYYGLLGVSR…EKRRIVDLGG (65 aa)). Residues 128-210 (GVTKQVTVDT…CVGDGRVRAR (83 aa)) form a CR-type zinc finger. Residues Cys141, Cys144, Cys158, Cys161, Cys184, Cys187, Cys198, and Cys201 each coordinate Zn(2+). CXXCXGXG motif repeat units lie at residues 141-148 (CDRCQGKG), 158-165 (CDTCGGRG), 184-191 (CPTCRGVG), and 198-205 (CCQCVGDG).

It belongs to the DnaJ family. As to quaternary structure, homodimer. It depends on Zn(2+) as a cofactor.

It localises to the cytoplasm. Functionally, participates actively in the response to hyperosmotic and heat shock by preventing the aggregation of stress-denatured proteins and by disaggregating proteins, also in an autonomous, DnaK-independent fashion. Unfolded proteins bind initially to DnaJ; upon interaction with the DnaJ-bound protein, DnaK hydrolyzes its bound ATP, resulting in the formation of a stable complex. GrpE releases ADP from DnaK; ATP binding to DnaK triggers the release of the substrate protein, thus completing the reaction cycle. Several rounds of ATP-dependent interactions between DnaJ, DnaK and GrpE are required for fully efficient folding. Also involved, together with DnaK and GrpE, in the DNA replication of plasmids through activation of initiation proteins. The polypeptide is Chaperone protein DnaJ 2 (Mycobacterium leprae (strain TN)).